We begin with the raw amino-acid sequence, 348 residues long: UDP-3-O-acylglucosamine N-acyltransferase (348 aa).

Residue histidine 241 is the Proton acceptor of the active site.

The protein belongs to the transferase hexapeptide repeat family. LpxD subfamily. Homotrimer.

The catalysed reaction is a UDP-3-O-[(3R)-3-hydroxyacyl]-alpha-D-glucosamine + a (3R)-hydroxyacyl-[ACP] = a UDP-2-N,3-O-bis[(3R)-3-hydroxyacyl]-alpha-D-glucosamine + holo-[ACP] + H(+). It functions in the pathway bacterial outer membrane biogenesis; LPS lipid A biosynthesis. Catalyzes the N-acylation of UDP-3-O-acylglucosamine using 3-hydroxyacyl-ACP as the acyl donor. Is involved in the biosynthesis of lipid A, a phosphorylated glycolipid that anchors the lipopolysaccharide to the outer membrane of the cell. This is UDP-3-O-acylglucosamine N-acyltransferase from Neisseria meningitidis serogroup B (strain ATCC BAA-335 / MC58).